We begin with the raw amino-acid sequence, 261 residues long: Small ribosomal subunit protein uS2 (261 aa).

Serine 2 is subject to N-acetylserine. A disordered region spans residues 212–261; it reads QNAAEEAKAEETEEAPAAEAETEWTGETDDVDWADSGATPAAEDAAASNW. Residues 222-244 show a composition bias toward acidic residues; sequence ETEEAPAAEAETEWTGETDDVDW.

The protein belongs to the universal ribosomal protein uS2 family. As to quaternary structure, component of the small ribosomal subunit. Mature ribosomes consist of a small (40S) and a large (60S) subunit. The 40S subunit contains about 33 different proteins and 1 molecule of RNA (18S). The 60S subunit contains about 49 different proteins and 3 molecules of RNA (25S, 5.8S and 5S). Interacts with RPS21.

It localises to the cytoplasm. Functionally, required for the assembly and/or stability of the 40S ribosomal subunit. Required for the processing of the 20S rRNA-precursor to mature 18S rRNA in a late step of the maturation of 40S ribosomal subunits. The sequence is that of Small ribosomal subunit protein uS2 from Candida tropicalis (Yeast).